The sequence spans 119 residues: Large ribosomal subunit protein bL20c (119 aa).

This sequence belongs to the bacterial ribosomal protein bL20 family.

It localises to the plastid. The protein localises to the chloroplast. Functionally, binds directly to 23S ribosomal RNA and is necessary for the in vitro assembly process of the 50S ribosomal subunit. It is not involved in the protein synthesizing functions of that subunit. This Lolium perenne (Perennial ryegrass) protein is Large ribosomal subunit protein bL20c.